The following is a 491-amino-acid chain: Transcription factor AP-2-alpha (491 aa).

Positions 74–161 are disordered; the sequence is GASNGTARLP…GQRQSQESGL (88 aa). Positions 111-116 match the PPxY motif motif; sequence YFPPPY. 2 stretches are compositionally biased toward low complexity: residues 119 to 128 and 142 to 155; these read IYPQSQDPYS and QPQP…GQRQ. Glycyl lysine isopeptide (Lys-Gly) (interchain with G-Cter in SUMO2) cross-links involve residues Lys231 and Lys238. Residue Ser293 is modified to Phosphoserine; by PKA. An H-S-H (helix-span-helix), dimerization region spans residues 334-464; that stretch reads RRKAANVTLL…YLTEALKAMD (131 aa). A compositionally biased stretch (polar residues) spans 468-481; that stretch reads LSNNPNSHTDNSAK. Positions 468–491 are disordered; it reads LSNNPNSHTDNSAKSSDKEEKHRK. The span at 482–491 shows a compositional bias: basic and acidic residues; the sequence is SSDKEEKHRK.

The protein belongs to the AP-2 family. Binds DNA as a dimer. Can form homodimers or heterodimers with other AP-2 family members. Interacts with WWOX. Interacts with CITED4. Interacts with UBE2I. Interacts with RALBP1 in a complex also containing EPN1 and NUMB during interphase and mitosis. Interacts with KCTD1; this interaction represses transcription activation. Interacts (via C-terminus) with CITED2 (via C-terminus); the interaction stimulates TFAP2A-transcriptional activation. Interacts (via N-terminus) with EP300 (via N-terminus); the interaction requires CITED2. Interacts with KCTD15; this interaction inhibits TFAP2A transcriptional activation.

The protein localises to the nucleus. Its function is as follows. Sequence-specific DNA-binding protein that interacts with inducible viral and cellular enhancer elements to regulate transcription of selected genes. AP-2 factors bind to the consensus sequence 5'-GCCNNNGGC-3' and activate genes involved in a large spectrum of important biological functions including proper eye, face, body wall, limb and neural tube development. They also suppress a number of genes including MCAM/MUC18, C/EBP alpha and MYC. AP-2-alpha is the only AP-2 protein required for early morphogenesis of the lens vesicle. Together with the CITED2 coactivator, stimulates the PITX2 P1 promoter transcription activation. Associates with chromatin to the PITX2 P1 promoter region. In Ovis aries (Sheep), this protein is Transcription factor AP-2-alpha (TFAP2A).